The following is a 98-amino-acid chain: Small ribosomal subunit protein bS20 (98 aa).

Belongs to the bacterial ribosomal protein bS20 family.

Its function is as follows. Binds directly to 16S ribosomal RNA. This is Small ribosomal subunit protein bS20 from Prochlorococcus marinus (strain NATL1A).